The following is a 358-amino-acid chain: MLLADWLQQFEPSFRVFSYLTLRAILSTLTALLIAVLIGPRMIRWLQTMQIGQTVRDDGPQSHLAKSGTPTMGGLLILAAIVVSVLLWADLTNRYVWVTLSVVVGYGIIGFIDDYRKVVRKDPKGLIARWKYFWQSVIAIGVALYLYASQQDPAETALLVPFFKDVMPQMGMFFVVMTYFVIVGTSNAVNLTDGLDGLAIVPTVLVAGAFAIFAYTTGNINFSAYLNIPYLPLTSELVIVCTAIVGAGLGFLWFNTYPAMVFMGDVGSLALGGTLGIIAVLVRQEIVLVIMGGVFVVETLSVILQVGSFKLRGQRIFRMAPIHHHYELKGWPEPRVIVRFWIISIILVLVGLATLKLR.

10 consecutive transmembrane segments (helical) span residues 19–39 (YLTL…VLIG), 71–91 (TMGG…WADL), 95–115 (YVWV…IDDY), 126–146 (LIAR…ALYL), 166–186 (VMPQ…VGTS), 194–214 (GLDG…AIFA), 237–257 (LVIV…FNTY), 261–281 (VFMG…IAVL), 286–306 (IVLV…ILQV), and 336–356 (VIVR…ATLK).

This sequence belongs to the glycosyltransferase 4 family. MraY subfamily. Requires Mg(2+) as cofactor.

Its subcellular location is the cell inner membrane. The enzyme catalyses UDP-N-acetyl-alpha-D-muramoyl-L-alanyl-gamma-D-glutamyl-meso-2,6-diaminopimeloyl-D-alanyl-D-alanine + di-trans,octa-cis-undecaprenyl phosphate = di-trans,octa-cis-undecaprenyl diphospho-N-acetyl-alpha-D-muramoyl-L-alanyl-D-glutamyl-meso-2,6-diaminopimeloyl-D-alanyl-D-alanine + UMP. It participates in cell wall biogenesis; peptidoglycan biosynthesis. In terms of biological role, catalyzes the initial step of the lipid cycle reactions in the biosynthesis of the cell wall peptidoglycan: transfers peptidoglycan precursor phospho-MurNAc-pentapeptide from UDP-MurNAc-pentapeptide onto the lipid carrier undecaprenyl phosphate, yielding undecaprenyl-pyrophosphoryl-MurNAc-pentapeptide, known as lipid I. The sequence is that of Phospho-N-acetylmuramoyl-pentapeptide-transferase from Pseudoalteromonas atlantica (strain T6c / ATCC BAA-1087).